The chain runs to 1072 residues: MPKYKDINKVLVIGSGPIIIGQAAEFDYSGTQACKSLKEEGVQVVLVNNNPATIMTDTDIADIVYIENPTVSVVEKIIAKERPEGILATLGGQTGLNLAVKLKEEGILDKYNVKLLGTSFESIKTAEDRELFKRKMQEIGEPVAESVTVTNIEDALKFAKNYGYPLIIRPAYTLGGTGGGIAHNDEELISIVDLGLKKSMVGEVLVEKSLYGWKEIEFEVMRDAADNCITICSMENFDPVGVHTGDSIVVAPTQTLSDYEYQMLRSASIKIIKALKIEGGCNIQFALDPKSHKYYVIEVNPRVSRSSALASKATGYPIAKIAAKIAIGLRLDEIKNPVTGKTTAFFEPALDYVVTKIPRWPFDKFYTTDRKIGTQMKATGEVMAIERSFEASLLKAVRSLEIKAYGLRLNNVKAMKTEEILKGISVPNDMRLFYIAEALRRDIDIDYINEVTKIDKWFLNKLLNIVNMEREVEKSELSEGILKKAKRMGFSDREIATIKGIKEEDVRMLRKQHGIYPSYKMVDTCAAEFESVTQYIYSTYGEEDEVEIHDMPKVIVIGSGPIRIGQGIEFDYCSVKALWALREAGIKSIIINNNPETVSTDFDTGDRLYFEPITLEDVLNIYEKEKPLGVMVMFGGQTAINLTEGLVKNRVKILGTSYESIDISEDREKFSKLLRELNINQPKGDYALTVEDAKDIALKLGFPLLIRPSYVIGGQSMEKVNTLQEIIDYVSNATQVSPGRPILIDKYIDGREVEVDAVSDGECVLIPGIMEHIERAGVHSGDSFSIYPARNLSEREINTIIEYTERISKALNVKGLINIQFAVKEGTVYVLEVNPRASRTVPIMSKATGVPMVKLAVEVALGKKLKELGYKSGLWPQTPYTVVKAPVFSMEKLTDAEVSLGPEMKSTGEIMGIDLSYEGALYKALEGAGLKIPKKGKILLSIAERDFQEVPSLVEKLQSLGYEIYATYRTGKYLSLMGIHVNVISLDNAIKLLKDGYFDAVINTPTKGKKPDNTGFKLRRTAVEYRIPLFTSMDTIKAALNAVAKVNVNGLSILSINEYEEIQKDNVKNLVL.

A carboxyphosphate synthetic domain region spans residues 1-401 (MPKYKDINKV…SLLKAVRSLE (401 aa)). Residues R129, R169, G175, G176, K208, L210, E215, G241, V242, H243, Q284, and E298 each contribute to the ATP site. In terms of domain architecture, ATP-grasp 1 spans 133–327 (KRKMQEIGEP…IAKIAAKIAI (195 aa)). Mg(2+) contacts are provided by Q284, E298, and N300. 3 residues coordinate Mn(2+): Q284, E298, and N300. Residues 402–544 (IKAYGLRLNN…YIYSTYGEED (143 aa)) are oligomerization domain. Residues 545–929 (EVEIHDMPKV…ALYKALEGAG (385 aa)) are carbamoyl phosphate synthetic domain. The 191-residue stretch at 671–861 (SKLLRELNIN…MVKLAVEVAL (191 aa)) folds into the ATP-grasp 2 domain. ATP contacts are provided by R707, K746, I748, E752, G777, V778, H779, S780, Q820, and E832. The Mg(2+) site is built by Q820, E832, and N834. Mn(2+) is bound by residues Q820, E832, and N834. One can recognise an MGS-like domain in the interval 930-1072 (LKIPKKGKIL…QKDNVKNLVL (143 aa)). Positions 930-1072 (LKIPKKGKIL…QKDNVKNLVL (143 aa)) are allosteric domain.

It belongs to the CarB family. In terms of assembly, composed of two chains; the small (or glutamine) chain promotes the hydrolysis of glutamine to ammonia, which is used by the large (or ammonia) chain to synthesize carbamoyl phosphate. Tetramer of heterodimers (alpha,beta)4. The cofactor is Mg(2+). It depends on Mn(2+) as a cofactor.

It catalyses the reaction hydrogencarbonate + L-glutamine + 2 ATP + H2O = carbamoyl phosphate + L-glutamate + 2 ADP + phosphate + 2 H(+). The catalysed reaction is hydrogencarbonate + NH4(+) + 2 ATP = carbamoyl phosphate + 2 ADP + phosphate + 2 H(+). It functions in the pathway amino-acid biosynthesis; L-arginine biosynthesis; carbamoyl phosphate from bicarbonate: step 1/1. The protein operates within pyrimidine metabolism; UMP biosynthesis via de novo pathway; (S)-dihydroorotate from bicarbonate: step 1/3. Large subunit of the glutamine-dependent carbamoyl phosphate synthetase (CPSase). CPSase catalyzes the formation of carbamoyl phosphate from the ammonia moiety of glutamine, carbonate, and phosphate donated by ATP, constituting the first step of 2 biosynthetic pathways, one leading to arginine and/or urea and the other to pyrimidine nucleotides. The large subunit (synthetase) binds the substrates ammonia (free or transferred from glutamine from the small subunit), hydrogencarbonate and ATP and carries out an ATP-coupled ligase reaction, activating hydrogencarbonate by forming carboxy phosphate which reacts with ammonia to form carbamoyl phosphate. In Thermoanaerobacter pseudethanolicus (strain ATCC 33223 / 39E) (Clostridium thermohydrosulfuricum), this protein is Carbamoyl phosphate synthase large chain.